A 154-amino-acid chain; its full sequence is 6,7-dimethyl-8-ribityllumazine synthase (154 aa).

5-amino-6-(D-ribitylamino)uracil is bound by residues Phe-23, 57–59 (AFE), and 81–83 (AVI). Position 86 to 87 (86 to 87 (ST)) interacts with (2S)-2-hydroxy-3-oxobutyl phosphate. His-89 functions as the Proton donor in the catalytic mechanism. Phe-114 is a 5-amino-6-(D-ribitylamino)uracil binding site. Arg-128 contributes to the (2S)-2-hydroxy-3-oxobutyl phosphate binding site.

It belongs to the DMRL synthase family.

It catalyses the reaction (2S)-2-hydroxy-3-oxobutyl phosphate + 5-amino-6-(D-ribitylamino)uracil = 6,7-dimethyl-8-(1-D-ribityl)lumazine + phosphate + 2 H2O + H(+). The protein operates within cofactor biosynthesis; riboflavin biosynthesis; riboflavin from 2-hydroxy-3-oxobutyl phosphate and 5-amino-6-(D-ribitylamino)uracil: step 1/2. Its function is as follows. Catalyzes the formation of 6,7-dimethyl-8-ribityllumazine by condensation of 5-amino-6-(D-ribitylamino)uracil with 3,4-dihydroxy-2-butanone 4-phosphate. This is the penultimate step in the biosynthesis of riboflavin. The polypeptide is 6,7-dimethyl-8-ribityllumazine synthase (Campylobacter jejuni subsp. jejuni serotype O:2 (strain ATCC 700819 / NCTC 11168)).